Reading from the N-terminus, the 516-residue chain is Probable malate:quinone oxidoreductase (516 aa).

It belongs to the MQO family. FAD serves as cofactor.

The enzyme catalyses (S)-malate + a quinone = a quinol + oxaloacetate. Its pathway is carbohydrate metabolism; tricarboxylic acid cycle; oxaloacetate from (S)-malate (quinone route): step 1/1. This is Probable malate:quinone oxidoreductase from Mycobacterium sp. (strain MCS).